The following is a 79-amino-acid chain: Small ribosomal subunit protein bS18 (79 aa).

This sequence belongs to the bacterial ribosomal protein bS18 family. As to quaternary structure, part of the 30S ribosomal subunit. Forms a tight heterodimer with protein bS6.

Binds as a heterodimer with protein bS6 to the central domain of the 16S rRNA, where it helps stabilize the platform of the 30S subunit. The polypeptide is Small ribosomal subunit protein bS18 (Nitrobacter winogradskyi (strain ATCC 25391 / DSM 10237 / CIP 104748 / NCIMB 11846 / Nb-255)).